A 317-amino-acid chain; its full sequence is Probable deoxyhypusine synthase 1 (317 aa).

Residue Lys-285 is the Nucleophile of the active site.

Belongs to the deoxyhypusine synthase family. Requires NAD(+) as cofactor.

The catalysed reaction is [eIF5A protein]-L-lysine + spermidine = [eIF5A protein]-deoxyhypusine + propane-1,3-diamine. It functions in the pathway protein modification; eIF5A hypusination. Functionally, catalyzes the NAD-dependent oxidative cleavage of spermidine and the subsequent transfer of the butylamine moiety of spermidine to the epsilon-amino group of a specific lysine residue of the eIF-5A precursor protein to form the intermediate deoxyhypusine residue. In Methanosarcina acetivorans (strain ATCC 35395 / DSM 2834 / JCM 12185 / C2A), this protein is Probable deoxyhypusine synthase 1 (dys1).